A 243-amino-acid polypeptide reads, in one-letter code: DNA repair protein RecO (243 aa).

The protein belongs to the RecO family.

Involved in DNA repair and RecF pathway recombination. The protein is DNA repair protein RecO of Geobacter sulfurreducens (strain ATCC 51573 / DSM 12127 / PCA).